The sequence spans 606 residues: Kelch-like protein 41 (606 aa).

Residue S3 is modified to Phosphoserine. Residues 33 to 100 (IDCTLKAGDK…LYSASIDLND (68 aa)) enclose the BTB domain. Positions 135–237 (CLAILRLGLL…AEKYFKDHVE (103 aa)) constitute a BACK domain. Kelch repeat units lie at residues 346 to 398 (QVYV…EVDD), 399 to 447 (KIYV…SHNG), 448 to 495 (MIYC…IHKG), 497 to 542 (IVIA…SLAG), and 544 to 599 (LYAI…TRLN).

As to quaternary structure, interacts with NRAP. Part of a complex that contains CUL3, RBX1 and KLHL41. Interacts with LASP1. Ubiquitinated by E3 ubiquitin ligase complex formed by CUL3 and RBX1 and probably targeted for proteasome-independent degradation. Quinone-induced oxidative stress increases its ubiquitination. Skeletal muscle. Localized between laterally fusing myofibrils in skeletal muscle (at protein level). Expressed at a lower level in the heart compared to skeletal muscle.

The protein resides in the cytoplasm. The protein localises to the cytoskeleton. It is found in the cell projection. It localises to the pseudopodium. Its subcellular location is the ruffle. The protein resides in the myofibril. The protein localises to the sarcomere. It is found in the m line. It localises to the sarcoplasmic reticulum membrane. Its subcellular location is the endoplasmic reticulum membrane. In terms of biological role, involved in skeletal muscle development and differentiation. Regulates proliferation and differentiation of myoblasts and plays a role in myofibril assembly by promoting lateral fusion of adjacent thin fibrils into mature, wide myofibrils. Required for pseudopod elongation in transformed cells. This Mus musculus (Mouse) protein is Kelch-like protein 41 (Klhl41).